The primary structure comprises 146 residues: UPF0735 ACT domain-containing protein CHY_1913 (146 aa).

Positions 70 to 145 constitute an ACT domain; that stretch reads TLALNLEHRA…GVSKVELVGQ (76 aa).

The protein belongs to the UPF0735 family.

This chain is UPF0735 ACT domain-containing protein CHY_1913, found in Carboxydothermus hydrogenoformans (strain ATCC BAA-161 / DSM 6008 / Z-2901).